We begin with the raw amino-acid sequence, 859 residues long: MNKAISDLSSHTPMMQQYWKLKNQHLDQLMFYRMGDFYEIFYEDAKKAAKLLDITLTARGQSAGQSIPMCGIPYHAAEGYLAKLVKLGESVVICEQIGDPATSKGPVDRQVVRIITPGTISDEALLDERRDNLIAAVLGDERLFGLAVLDITSGNFSVLEIKGWENLLAELERINPVELLIPDDWPQGLPAEKRRGARRRAPWDFERDSAHKSLCQQFSTQDLKGFGCENLTLAIGAAGCLLSYAKETQRTALPHLRSLRHERLDDTVILDAASRRNLELDTNLSGGRDNTLQSVMDRCQTAMGTRLLTRWLNRPLRDLTILQARQTSITCFLERYRFENLQPQLKEIGDIERILARIGLRNARPRDLARLRDALSALPELQQAMTDLEAPHLQQLAQTASTYPELADLLQRAIIDNPPAVIRDGGVLKTGYDAELDDLQSLSENAGQFLIDLEAREKARTGLANLKVGYNRVHGYFIELPSKQAEQAPADYIRRQTLKGAERFITPELKEFEDKALSAKSRALAREKMLYEALLEDLIGHLAPLQDTAAALAELDVLSNLAERALNLDLNCPRFVAEPCMRIEQGRHPVVEQVLSTPFVANDLALDDSTRMLVITGPNMGGKSTYMRQTALIVLLAHIGSFVPAASCELSLVDRIFTRIGSSDDLAGGRSTFMVEMSETANILHNATDKSLVLMDEVGRGTSTFDGLSLAWAAAECLAQLRAYTLFATHYFELTVLPESEPLVSNVHLNATEHNERIVFLHRVLPGPASQSYGLAVAQLAGVPGKVISRAKEHLQRLETTSLPHEQPRAKPGKPAVPQQSDMFASLPHPVLDELSKVKVDDMTPRQALDLLYTLQTRL.

617 to 624 (GPNMGGKS) is an ATP binding site. Positions 799 to 821 (ETTSLPHEQPRAKPGKPAVPQQS) are disordered.

It belongs to the DNA mismatch repair MutS family.

In terms of biological role, this protein is involved in the repair of mismatches in DNA. It is possible that it carries out the mismatch recognition step. This protein has a weak ATPase activity. This is DNA mismatch repair protein MutS from Pseudomonas savastanoi pv. phaseolicola (strain 1448A / Race 6) (Pseudomonas syringae pv. phaseolicola (strain 1448A / Race 6)).